We begin with the raw amino-acid sequence, 405 residues long: 4-hydroxy-3-methylbut-2-enyl diphosphate reductase (405 aa).

Position 66 (Cys-66) interacts with [4Fe-4S] cluster. His-96 contributes to the (2E)-4-hydroxy-3-methylbut-2-enyl diphosphate binding site. Residue His-96 participates in dimethylallyl diphosphate binding. His-96 provides a ligand contact to isopentenyl diphosphate. Cys-157 lines the [4Fe-4S] cluster pocket. His-185 is a (2E)-4-hydroxy-3-methylbut-2-enyl diphosphate binding site. His-185 is a binding site for dimethylallyl diphosphate. His-185 serves as a coordination point for isopentenyl diphosphate. Glu-187 serves as the catalytic Proton donor. Thr-250 contributes to the (2E)-4-hydroxy-3-methylbut-2-enyl diphosphate binding site. Cys-288 is a binding site for [4Fe-4S] cluster. Positions 317, 318, 319, and 380 each coordinate (2E)-4-hydroxy-3-methylbut-2-enyl diphosphate. Dimethylallyl diphosphate contacts are provided by Ser-317, Ser-318, Asn-319, and Ser-380. Positions 317, 318, 319, and 380 each coordinate isopentenyl diphosphate.

Belongs to the IspH family. [4Fe-4S] cluster is required as a cofactor.

It catalyses the reaction isopentenyl diphosphate + 2 oxidized [2Fe-2S]-[ferredoxin] + H2O = (2E)-4-hydroxy-3-methylbut-2-enyl diphosphate + 2 reduced [2Fe-2S]-[ferredoxin] + 2 H(+). It carries out the reaction dimethylallyl diphosphate + 2 oxidized [2Fe-2S]-[ferredoxin] + H2O = (2E)-4-hydroxy-3-methylbut-2-enyl diphosphate + 2 reduced [2Fe-2S]-[ferredoxin] + 2 H(+). It functions in the pathway isoprenoid biosynthesis; dimethylallyl diphosphate biosynthesis; dimethylallyl diphosphate from (2E)-4-hydroxy-3-methylbutenyl diphosphate: step 1/1. Its pathway is isoprenoid biosynthesis; isopentenyl diphosphate biosynthesis via DXP pathway; isopentenyl diphosphate from 1-deoxy-D-xylulose 5-phosphate: step 6/6. Its function is as follows. Catalyzes the conversion of 1-hydroxy-2-methyl-2-(E)-butenyl 4-diphosphate (HMBPP) into a mixture of isopentenyl diphosphate (IPP) and dimethylallyl diphosphate (DMAPP). Acts in the terminal step of the DOXP/MEP pathway for isoprenoid precursor biosynthesis. The chain is 4-hydroxy-3-methylbut-2-enyl diphosphate reductase from Prochlorococcus marinus (strain SARG / CCMP1375 / SS120).